Reading from the N-terminus, the 341-residue chain is KH domain-containing RNA-binding protein QKI (341 aa).

The segment at 11–82 is qua1 domain; involved in homodimerization; it reads PNPTPDYLMQ…PDAVGPIVQL (72 aa). Residues 87-153 enclose the KH domain; sequence YVPVKEYPDF…WEHLNEDLHV (67 aa). Positions 182-213 are qua2 domain; involved in RNA binding; that stretch reads AAEGEDSLKKMQLMELAILNGTYRDANIKSPA. S188 bears the Phosphoserine mark. The residue at position 227 (R227) is an Omega-N-methylarginine. Residue R242 is modified to Asymmetric dimethylarginine; by CARM1; alternate. Omega-N-methylarginine; alternate is present on R242. R256 is subject to Omega-N-methylarginine. The SH3-binding signature appears at 276-279; the sequence is PPGP. The Nuclear localization signal signature appears at 324–330; the sequence is RVHPYQR.

The protein belongs to the quaking family. Homodimer; does not require RNA to homodimerize. Able to heterodimerize with BICC1. Methylated by PRMT1. Post-translationally, tyrosine phosphorylated at its C-terminus, probably by FYN. Phosphorylation leads to decreased mRNA-binding affinity, affecting transport and/or stabilization of MBP mRNA. In terms of processing, ubiquitinated by RNF6 in macrophages, leading to its degradation. As to expression, present in myelinating oligodendrocytes (at protein level).

Its subcellular location is the nucleus. It is found in the cytoplasm. RNA reader protein, which recognizes and binds specific RNAs, thereby regulating RNA metabolic processes, such as pre-mRNA splicing, circular RNA (circRNA) formation, mRNA export, mRNA stability and/or translation. Involved in various cellular processes, such as mRNA storage into stress granules, apoptosis, lipid deposition, interferon response, glial cell fate and development. Binds to the 5'-NACUAAY-N(1,20)-UAAY-3' RNA core sequence. Acts as a mRNA modification reader that specifically recognizes and binds mRNA transcripts modified by internal N(7)-methylguanine (m7G). Promotes the formation of circular RNAs (circRNAs) during the epithelial to mesenchymal transition and in cardiomyocytes: acts by binding to sites flanking circRNA-forming exons. CircRNAs are produced by back-splicing circularization of pre-mRNAs. Plays a central role in myelinization via 3 distinct mechanisms. First, acts by protecting and promoting stability of target mRNAs such as MBP, SIRT2 and CDKN1B, which promotes oligodendrocyte differentiation. Second, participates in mRNA transport by regulating the nuclear export of MBP mRNA. Finally, indirectly regulates mRNA splicing of MAG pre-mRNA during oligodendrocyte differentiation by acting as a negative regulator of MAG exon 12 alternative splicing: acts by binding to HNRNPA1 mRNA splicing factor, preventing its translation. Involved in microglia differentiation and remyelination by regulating microexon alternative splicing of the Rho GTPase pathway. Involved in macrophage differentiation: promotes monocyte differentiation by regulating pre-mRNA splicing in naive peripheral blood monocytes. Acts as an important regulator of muscle development: required for the contractile function of cardiomyocytes by regulating alternative splicing of cardiomyocyte transcripts. Acts as a negative regulator of thermogenesis by decreasing stability, nuclear export and translation of mRNAs encoding PPARGC1A and UCP1. Also required for visceral endoderm function and blood vessel development. May also play a role in smooth muscle development. In addition to its RNA-binding activity, also acts as a nuclear transcription coactivator for SREBF2/SREBP2. This is KH domain-containing RNA-binding protein QKI from Rattus norvegicus (Rat).